The primary structure comprises 187 residues: MGIDIERHHVKKSQRSKPASENVYLKLLVKLYRFLARRTDSRFNKAILKRLFQSKTNRPPISISKIAALTSRKSASSQNKTTVVVGTVTDDERMLTVPKLSIAALRFTKSARARILKAGGEVLTLDQLALRAPTGSNTVLVRGKKHAREAYRHFGFGPHKHKAPYVRSEGRKFERARGRRKSRAFKV.

S16 and S64 each carry phosphoserine. Phosphothreonine occurs at positions 87, 89, and 134. A Phosphoserine modification is found at S136. The residue at position 138 (T138) is a Phosphothreonine.

Belongs to the eukaryotic ribosomal protein eL18 family. Component of the large ribosomal subunit (LSU). Mature yeast ribosomes consist of a small (40S) and a large (60S) subunit. The 40S small subunit contains 1 molecule of ribosomal RNA (18S rRNA) and at least 33 different proteins. The large 60S subunit contains 3 rRNA molecules (25S, 5.8S and 5S rRNA) and at least 46 different proteins. eL18 interacts with NAP1.

The protein resides in the cytoplasm. In terms of biological role, component of the ribosome, a large ribonucleoprotein complex responsible for the synthesis of proteins in the cell. The small ribosomal subunit (SSU) binds messenger RNAs (mRNAs) and translates the encoded message by selecting cognate aminoacyl-transfer RNA (tRNA) molecules. The large subunit (LSU) contains the ribosomal catalytic site termed the peptidyl transferase center (PTC), which catalyzes the formation of peptide bonds, thereby polymerizing the amino acids delivered by tRNAs into a polypeptide chain. The nascent polypeptides leave the ribosome through a tunnel in the LSU and interact with protein factors that function in enzymatic processing, targeting, and the membrane insertion of nascent chains at the exit of the ribosomal tunnel. This chain is Large ribosomal subunit protein eL18A (rpl1801), found in Schizosaccharomyces pombe (strain 972 / ATCC 24843) (Fission yeast).